We begin with the raw amino-acid sequence, 248 residues long: Uridylate kinase (248 aa).

15-18 (KLSG) is a binding site for ATP. The segment at 23–28 (GAEGFG) is involved in allosteric activation by GTP. Residue Gly-57 participates in UMP binding. The ATP site is built by Gly-58 and Arg-62. UMP contacts are provided by residues Asp-77 and 138 to 145 (TGNPFFTT). ATP contacts are provided by Thr-165, Tyr-171, and Asp-174.

Belongs to the UMP kinase family. Homohexamer.

Its subcellular location is the cytoplasm. The catalysed reaction is UMP + ATP = UDP + ADP. Its pathway is pyrimidine metabolism; CTP biosynthesis via de novo pathway; UDP from UMP (UMPK route): step 1/1. Allosterically activated by GTP. Inhibited by UTP. Functionally, catalyzes the reversible phosphorylation of UMP to UDP. This chain is Uridylate kinase, found in Yersinia enterocolitica serotype O:8 / biotype 1B (strain NCTC 13174 / 8081).